The chain runs to 181 residues: GMP synthase [glutamine-hydrolyzing] subunit A (181 aa).

Residues 2–181 (KILVVNNYGQ…FDNFLEICRR (180 aa)) enclose the Glutamine amidotransferase type-1 domain. The active-site Nucleophile is Cys-72. Active-site residues include His-159 and Glu-161.

Heterodimer composed of a glutamine amidotransferase subunit (A) and a GMP-binding subunit (B).

It carries out the reaction XMP + L-glutamine + ATP + H2O = GMP + L-glutamate + AMP + diphosphate + 2 H(+). Its pathway is purine metabolism; GMP biosynthesis; GMP from XMP (L-Gln route): step 1/1. Functionally, catalyzes the synthesis of GMP from XMP. The chain is GMP synthase [glutamine-hydrolyzing] subunit A from Methanothrix thermoacetophila (strain DSM 6194 / JCM 14653 / NBRC 101360 / PT) (Methanosaeta thermophila).